A 286-amino-acid polypeptide reads, in one-letter code: ATP synthase gamma chain (286 aa).

The protein belongs to the ATPase gamma chain family. F-type ATPases have 2 components, CF(1) - the catalytic core - and CF(0) - the membrane proton channel. CF(1) has five subunits: alpha(3), beta(3), gamma(1), delta(1), epsilon(1). CF(0) has three main subunits: a, b and c.

Its subcellular location is the cell inner membrane. Produces ATP from ADP in the presence of a proton gradient across the membrane. The gamma chain is believed to be important in regulating ATPase activity and the flow of protons through the CF(0) complex. The protein is ATP synthase gamma chain of Shewanella sediminis (strain HAW-EB3).